The sequence spans 152 residues: Ribosome maturation factor RimP (152 aa).

The protein belongs to the RimP family.

Its subcellular location is the cytoplasm. Its function is as follows. Required for maturation of 30S ribosomal subunits. The chain is Ribosome maturation factor RimP from Paraburkholderia xenovorans (strain LB400).